We begin with the raw amino-acid sequence, 124 residues long: Small ribosomal subunit protein uS12 (124 aa).

Position 89 is a 3-methylthioaspartic acid (Asp89).

This sequence belongs to the universal ribosomal protein uS12 family. In terms of assembly, part of the 30S ribosomal subunit. Contacts proteins S8 and S17. May interact with IF1 in the 30S initiation complex.

Its function is as follows. With S4 and S5 plays an important role in translational accuracy. Functionally, interacts with and stabilizes bases of the 16S rRNA that are involved in tRNA selection in the A site and with the mRNA backbone. Located at the interface of the 30S and 50S subunits, it traverses the body of the 30S subunit contacting proteins on the other side and probably holding the rRNA structure together. The combined cluster of proteins S8, S12 and S17 appears to hold together the shoulder and platform of the 30S subunit. The protein is Small ribosomal subunit protein uS12 of Vibrio cholerae serotype O1 (strain ATCC 39315 / El Tor Inaba N16961).